The chain runs to 854 residues: DNA mismatch repair protein MutS (854 aa).

Residue 615 to 622 (GPNMGGKS) coordinates ATP.

Belongs to the DNA mismatch repair MutS family.

Functionally, this protein is involved in the repair of mismatches in DNA. It is possible that it carries out the mismatch recognition step. This protein has a weak ATPase activity. The protein is DNA mismatch repair protein MutS of Aliivibrio fischeri (strain ATCC 700601 / ES114) (Vibrio fischeri).